The primary structure comprises 494 residues: Neuronal pentraxin receptor (494 aa).

Topologically, residues 1–2 (MK) are cytoplasmic. A helical; Signal-anchor for type II membrane protein transmembrane segment spans residues 3 to 23 (FLAVLLAAGMLAFLGAVICII). The Extracellular portion of the chain corresponds to 24 to 494 (ASVPLAASPA…FDVCKRRAKA (471 aa)). The interval 37-80 (PGGTDNASAASAAGAPGPQRSLSALQGAGGSAGPSVLPGEPAAS) is disordered. N-linked (GlcNAc...) asparagine glycosylation occurs at N42. 2 stretches are compositionally biased toward low complexity: residues 43–62 (ASAASAAGAPGPQRSLSALQ) and 69–80 (GPSVLPGEPAAS). A glycan (N-linked (GlcNAc...) asparagine) is linked at N211. The 203-residue stretch at 286 to 488 (DAFKVSIPIR…GAKKAAFDVC (203 aa)) folds into the Pentraxin (PTX) domain. C316 and C377 are disulfide-bonded. Ca(2+) is bound by residues N341, E419, Q420, D421, and Q431. N-linked (GlcNAc...) asparagine glycosylation is present at N457.

As to quaternary structure, interacts with KLHL2. Heteropentamer with NPTX1 and/or NPTX2. Also binds taipoxin-associated calcium-binding protein 49 (TCBP49/RCN2). The cofactor is Ca(2+). In terms of processing, N-glycosylated. Post-translationally, ubiquitinated by a cullin-RING-based BCR (BTB-CUL3-RBX1) E3 ubiquitin-protein ligase complex containing KLHL2. In terms of tissue distribution, brain specific.

Its subcellular location is the membrane. May be involved in mediating uptake of synaptic material during synapse remodeling or in mediating the synaptic clustering of AMPA glutamate receptors at a subset of excitatory synapses. This chain is Neuronal pentraxin receptor (Nptxr), found in Rattus norvegicus (Rat).